A 195-amino-acid chain; its full sequence is Cytochrome c oxidase subunit 1 (195 aa).

Residues 12–32 (MYWVLGFIFLFTLGGLTGIVL) traverse the membrane as a helical segment. Mg(2+)-binding residues include His-42 and Asp-43. His-50 is a binding site for heme a3. His-52 provides a ligand contact to Fe(II)-heme a. Helical transmembrane passes span 59–79 (AVFA…GLVL), 88–108 (FIVM…LGLA), and 131–151 (GSLM…EAFL).

The protein belongs to the heme-copper respiratory oxidase family. Component of the cytochrome c oxidase (complex IV, CIV), a multisubunit enzyme composed of a catalytic core of 3 subunits and several supernumerary subunits. The complex exists as a monomer or a dimer and forms supercomplexes (SCs) in the inner mitochondrial membrane with ubiquinol-cytochrome c oxidoreductase (cytochrome b-c1 complex, complex III, CIII). Requires heme as cofactor. The cofactor is Cu cation.

It is found in the mitochondrion inner membrane. It carries out the reaction 4 Fe(II)-[cytochrome c] + O2 + 8 H(+)(in) = 4 Fe(III)-[cytochrome c] + 2 H2O + 4 H(+)(out). It participates in energy metabolism; oxidative phosphorylation. In terms of biological role, component of the cytochrome c oxidase, the last enzyme in the mitochondrial electron transport chain which drives oxidative phosphorylation. The respiratory chain contains 3 multisubunit complexes succinate dehydrogenase (complex II, CII), ubiquinol-cytochrome c oxidoreductase (cytochrome b-c1 complex, complex III, CIII) and cytochrome c oxidase (complex IV, CIV), that cooperate to transfer electrons derived from NADH and succinate to molecular oxygen, creating an electrochemical gradient over the inner membrane that drives transmembrane transport and the ATP synthase. Cytochrome c oxidase is the component of the respiratory chain that catalyzes the reduction of oxygen to water. Electrons originating from reduced cytochrome c in the intermembrane space (IMS) are transferred via the dinuclear copper A center (CU(A)) of subunit 2 and heme A of subunit 1 to the active site in subunit 1, a binuclear center (BNC) formed by heme A3 and copper B (CU(B)). The BNC reduces molecular oxygen to 2 water molecules using 4 electrons from cytochrome c in the IMS and 4 protons from the mitochondrial matrix. This chain is Cytochrome c oxidase subunit 1 (COI), found in Albinaria turrita (Door snail).